A 248-amino-acid chain; its full sequence is Ribosomal RNA small subunit methyltransferase G (248 aa).

The segment at 1–23 (MFHVKHVGPVEPAAGDPEVPPVA) is disordered. Residues Gly-93, Leu-98, 143 to 144 (AE), and Arg-161 each bind S-adenosyl-L-methionine. The tract at residues 226–248 (VVSARRAKPPHPKSARTGKAGTR) is disordered. Over residues 230-248 (RRAKPPHPKSARTGKAGTR) the composition is skewed to basic residues.

Belongs to the methyltransferase superfamily. RNA methyltransferase RsmG family.

It is found in the cytoplasm. Its function is as follows. Specifically methylates the N7 position of guanine in position 518 of 16S rRNA. This Mycolicibacterium paratuberculosis (strain ATCC BAA-968 / K-10) (Mycobacterium paratuberculosis) protein is Ribosomal RNA small subunit methyltransferase G.